We begin with the raw amino-acid sequence, 223 residues long: Putative 3-methyladenine DNA glycosylase (223 aa).

Belongs to the DNA glycosylase MPG family.

The sequence is that of Putative 3-methyladenine DNA glycosylase from Pseudomonas syringae pv. syringae (strain B728a).